The chain runs to 700 residues: Elongation factor G (700 aa).

Residues 8 to 290 (ERYRNIGISA…AVIDYLPSPV (283 aa)) form the tr-type G domain. GTP is bound by residues 17–24 (AHIDAGKT), 88–92 (DTPGH), and 142–145 (NKMD).

This sequence belongs to the TRAFAC class translation factor GTPase superfamily. Classic translation factor GTPase family. EF-G/EF-2 subfamily.

The protein localises to the cytoplasm. Catalyzes the GTP-dependent ribosomal translocation step during translation elongation. During this step, the ribosome changes from the pre-translocational (PRE) to the post-translocational (POST) state as the newly formed A-site-bound peptidyl-tRNA and P-site-bound deacylated tRNA move to the P and E sites, respectively. Catalyzes the coordinated movement of the two tRNA molecules, the mRNA and conformational changes in the ribosome. This Leptothrix cholodnii (strain ATCC 51168 / LMG 8142 / SP-6) (Leptothrix discophora (strain SP-6)) protein is Elongation factor G.